The following is a 581-amino-acid chain: Multidrug and toxin extrusion protein 2 (581 aa).

The Cytoplasmic segment spans residues 1–33 (MDSLQDTVPLDHGGCCPALSRLVPRGFGTEMWT). The helical transmembrane segment at 34-54 (LFALSGPLFLFQVLTFMIYIV) threads the bilayer. The Extracellular portion of the chain corresponds to 55–66 (STVFCGHLGKVE). Residues 67 to 87 (LASVTLAVAFVNVCGVSVGVG) form a helical membrane-spanning segment. At 88–119 (LSSACDTLMSQSFGSPNKKHVGVILQRGALVL) the chain is on the cytoplasmic side. The chain crosses the membrane as a helical span at residues 120 to 140 (LLCCLPCWALFLNTQHILLLF). At 141 to 153 (RQDPEVSRLTQDY) the chain is on the extracellular side. A helical membrane pass occupies residues 154–174 (VMIFIPGLPVIFLYNLLAKYL). Residues 175–183 (QNQKITWPQ) lie on the Cytoplasmic side of the membrane. Residues 184 to 204 (VLSGVVGNCVNGVANYALVSV) form a helical membrane-spanning segment. The Extracellular portion of the chain corresponds to 205–212 (LNLGVRGS). Residues 213–233 (AYANIISQFAQTVFLLLYIVL) form a helical membrane-spanning segment. Topologically, residues 234 to 253 (KKLHLETWAGWSSQCLQDWG) are cytoplasmic. The helical transmembrane segment at 254 to 273 (PFFSLAVPSMLMICVEWWAY) threads the bilayer. Topologically, residues 274–317 (EIGSFLMGLLSVVDLSAQAVIYEVATVTYMRHSHHLAYTAHVAR) are extracellular. The helical transmembrane segment at 318 to 338 (IPLGLSIGVCVRVGMALGAAD) threads the bilayer. Over 339–346 (TVQAKRSA) the chain is Cytoplasmic. Residues 347 to 367 (VSGVLSIVGISLVLGTLISIL) traverse the membrane as a helical segment. The Extracellular portion of the chain corresponds to 368–380 (KNQLGHIFTNDED). The helical transmembrane segment at 381–401 (VIALVSQVLPVYSVFHVFEAI) threads the bilayer. The Cytoplasmic segment spans residues 402–420 (CCVYGGVLRGTGKQAFGAA). Residues 421-441 (VNAITYYIIGLPLGILLTFVV) traverse the membrane as a helical segment. Residues 442–444 (RMR) are Extracellular-facing. Residues 445–465 (IMGLWLGMLACVFLATAAFVA) traverse the membrane as a helical segment. The Cytoplasmic segment spans residues 466–557 (YTARLDWKLA…LSVKQLVIRR (92 aa)). The interval 481–513 (KHSGQQQQQQRAESTATRSGPEKAVLSSVATGS) is disordered. A helical transmembrane segment spans residues 558–578 (GAALGAASATLMVGLTVRILA). At 579–581 (TRH) the chain is on the extracellular side.

Belongs to the multi antimicrobial extrusion (MATE) (TC 2.A.66.1) family.

The protein resides in the cell membrane. It is found in the apical cell membrane. It carries out the reaction thiamine(out) + H(+)(in) = thiamine(in) + H(+)(out). It catalyses the reaction estrone 3-sulfate(in) + H(+)(out) = estrone 3-sulfate(out) + H(+)(in). The enzyme catalyses creatinine(in) + H(+)(out) = creatinine(out) + H(+)(in). Multidrug efflux pump that functions as a H(+)/organic cation antiporter. Mediates the efflux of cationic compounds, such as the model cations, tetraethylammonium (TEA) and 1-methyl-4-phenylpyridinium (MPP+), the platinum-based drug oxaliplatin or weak bases that are positively charged at physiological pH, cimetidine or the antidiabetic drug metformin. Mediates the efflux of the endogenous compounds creatinine, thiamine and estrone-3-sulfate. Plays a physiological role in the excretion of drugs, toxins and endogenous metabolites through the kidney. In Pongo abelii (Sumatran orangutan), this protein is Multidrug and toxin extrusion protein 2 (SLC47A2).